The primary structure comprises 917 residues: Hexokinase-2 (917 aa).

M1 is modified (N-acetylmethionine). The mitochondrial-binding peptide (MBP) stretch occupies residues 1-16 (MIASHMIACLFTELNQ). Hexokinase domains follow at residues 16-458 (QNQV…MVTA) and 464-906 (ADQH…LITA). ATP is bound by residues R30 and 84–89 (DLGGTN). The interval 73-207 (DGTEHGEFLA…DFDIDIVAVV (135 aa)) is hexokinase small subdomain 1. 84–88 (DLGGT) provides a ligand contact to D-glucose 6-phosphate. Residues 155 to 156 (SF), 172 to 173 (TK), and 208 to 209 (ND) each bind D-glucose. The tract at residues 208–447 (NDTVGTMMTC…CDVRFLRSED (240 aa)) is hexokinase large subdomain 1. D-glucose 6-phosphate contacts are provided by D209 and T232. D-glucose-binding positions include N235, E260, and 291–294 (QLFE). A D-glucose 6-phosphate-binding site is contributed by 413–415 (DGS). An ATP-binding site is contributed by 425 to 426 (KR). Residues S449 and 532–536 (DLGGT) contribute to the D-glucose 6-phosphate site. Positions 521-655 (DGTEKGDFLA…EFDLDVVAVV (135 aa)) are hexokinase small subdomain 2. An ATP-binding site is contributed by 532-537 (DLGGTN). Residues 603 to 604 (SF), 620 to 621 (TK), and 656 to 657 (ND) contribute to the D-glucose site. The interval 656–895 (NDTVGTMMTC…CDVSFLESED (240 aa)) is hexokinase large subdomain 2. Positions 657 and 680 each coordinate D-glucose 6-phosphate. Residue T680 participates in ATP binding. Residues 682-683 (SN), E708, and 739-742 (QRFE) contribute to the D-glucose site. Residues 747 to 748 (GM), 784 to 788 (TKFLS), and 863 to 867 (TLYKL) each bind ATP. D-glucose 6-phosphate is bound by residues 861 to 863 (DGT) and S897.

Belongs to the hexokinase family. As to quaternary structure, monomer. Interacts with TIGAR; the interaction increases hexokinase activity in a hypoxia- and HIF1A-dependent manner.

It localises to the mitochondrion outer membrane. Its subcellular location is the cytoplasm. It is found in the cytosol. The enzyme catalyses a D-hexose + ATP = a D-hexose 6-phosphate + ADP + H(+). It catalyses the reaction D-fructose + ATP = D-fructose 6-phosphate + ADP + H(+). The catalysed reaction is D-glucose + ATP = D-glucose 6-phosphate + ADP + H(+). The protein operates within carbohydrate metabolism; hexose metabolism. It participates in carbohydrate degradation; glycolysis; D-glyceraldehyde 3-phosphate and glycerone phosphate from D-glucose: step 1/4. Hexokinase activity is specifically inhibited by 2,6-disubstituted glucosamines. In terms of biological role, catalyzes the phosphorylation of hexose, such as D-glucose and D-fructose, to hexose 6-phosphate (D-glucose 6-phosphate and D-fructose 6-phosphate, respectively). Mediates the initial step of glycolysis by catalyzing phosphorylation of D-glucose to D-glucose 6-phosphate. Plays a key role in maintaining the integrity of the outer mitochondrial membrane by preventing the release of apoptogenic molecules from the intermembrane space and subsequent apoptosis. The protein is Hexokinase-2 of Rattus norvegicus (Rat).